The following is a 353-amino-acid chain: Rhodopsin (353 aa).

Residues 1 to 36 lie on the Extracellular side of the membrane; sequence MNGTEGPYFYIPMVNTTGIVRSPYEYPQYYLVNPAA. Asparagine 2 and asparagine 15 each carry an N-linked (GlcNAc...) asparagine glycan. The helical transmembrane segment at 37–61 threads the bilayer; it reads YAALGAYMFLLILIGFPVNFLTLYV. Over 62-73 the chain is Cytoplasmic; sequence TIEHKKLRTPLN. The helical transmembrane segment at 74–96 threads the bilayer; sequence YILLNLAVADLFMVFGGFTTTMY. Residues 97–110 lie on the Extracellular side of the membrane; that stretch reads TSMHGYFVLGRLGC. Cysteine 110 and cysteine 187 are joined by a disulfide. Residues 111–133 traverse the membrane as a helical segment; that stretch reads NLEGFFATLGGEIALWSLVVLAV. A 'Ionic lock' involved in activated form stabilization motif is present at residues 134 to 136; that stretch reads ERW. Residues 134–152 are Cytoplasmic-facing; it reads ERWMVVCKPISNFRFGEDH. Residues 153–173 traverse the membrane as a helical segment; it reads AIMGLAFTWVMAAACAVPPLV. The Extracellular segment spans residues 174 to 202; that stretch reads GWSRYIPEGMQCSCGIDYYTRAEGFNNES. Asparagine 200 is a glycosylation site (N-linked (GlcNAc...) asparagine). The chain crosses the membrane as a helical span at residues 203–224; it reads FVIYMFVCHFLIPLVVVFFCYG. At 225–252 the chain is on the cytoplasmic side; it reads RLLCAVKEAAAAQQESETTQRAEREVSR. A helical membrane pass occupies residues 253-274; it reads MVVIMVVAFLVCWCPYAGVAWY. At 275–286 the chain is on the extracellular side; the sequence is IFTHQGSEFGPL. Residues 287-308 traverse the membrane as a helical segment; the sequence is FMTFPAFFAKSSSIYNPMIYIC. Lysine 296 carries the post-translational modification N6-(retinylidene)lysine. The Cytoplasmic portion of the chain corresponds to 309 to 353; sequence MNKQFRQCMITTLCCGKNPFEEEEGASTTSKTEASSVSSSSVSPA. Residues cysteine 322 and cysteine 323 are each lipidated (S-palmitoyl cysteine). A disordered region spans residues 329–353; it reads EEEEGASTTSKTEASSVSSSSVSPA. Residues 334–353 show a composition bias toward low complexity; it reads ASTTSKTEASSVSSSSVSPA.

The protein belongs to the G-protein coupled receptor 1 family. Opsin subfamily. Post-translationally, phosphorylated on some or all of the serine and threonine residues present in the C-terminal region. Contains one covalently linked retinal chromophore.

Its subcellular location is the membrane. It localises to the cell projection. It is found in the cilium. The protein resides in the photoreceptor outer segment. Functionally, photoreceptor required for image-forming vision at low light intensity. While most salt water fish species use retinal as chromophore, most freshwater fish use 3-dehydroretinal, or a mixture of retinal and 3-dehydroretinal. Light-induced isomerization of 11-cis to all-trans retinal triggers a conformational change that activates signaling via G-proteins. Subsequent receptor phosphorylation mediates displacement of the bound G-protein alpha subunit by arrestin and terminates signaling. The sequence is that of Rhodopsin (rho) from Chelon auratus (Golden grey mullet).